The chain runs to 667 residues: MSSRLFVFFLICYATADKIEKELISDGFQLFTWKWDDVHHVYVITVWLLIASLAKILFNLMKPISKWCPDSSLLIIVGLALGWILHQTSLSGATLDSHTFFLYLLPPIIFDAGYFMPNRALFENFDSVLVFSVFGTIWNTFAIGGSLLLMAQYDLFTMSFTTFEILVFSALISAVDPVAVIAVFEEIHVNEFLFINVFGEALFNDGVTVVLYQMFKSFALIGSENLSVLDYATGGLSFFVVALGGAAVGIIFAIAASLTTKYTYDVRILAPVFIFVLPYMAYLTAEMVSLSSIIAIAICGMLMKQYIKGNVTQAAANSVKYFTKMLAQSSETVIFMFLGLSTISSQHHFDLYFICATLFFCLIYRAIGIVVQCYILNRFRAKKFEMVDQFIMSYGGLRGAIAYGLVVSIPASITAKPMFITATIAVIYFTVFLQGITIRPLVNFLKIKKKEERDPTMVESVYNKYLDYMMSGVEDIAGQKGHYTFIENFERFNAKVIKPVLMRHQKRESFDASSIVRAYEKITLEDAIKLAKVKNNIQNKRLERIKSKGRVAPILPDKISNQKTMTPKDLQLKRFMESGENIDSLYTLFSDLLDRKLHEMNRPSVQITDVDGQDDIQDDYMAEVGSRSNLSAMFRSTEQLPSETPFHSGRRQSTGDLNATRRADFNV.

Helical transmembrane passes span 41–61, 73–93, 97–117, 128–148, 165–185, 192–212, 236–256, and 268–288; these read VYVI…FNLM, LLII…LSGA, SHTF…YFMP, VLVF…GSLL, ILVF…AVFE, FLFI…VVLY, LSFF…AIAA, and ILAP…AEMV. N-linked (GlcNAc...) asparagine glycosylation occurs at Asn310. 4 consecutive transmembrane segments (helical) span residues 325-345, 351-371, 390-410, and 418-438; these read MLAQ…TISS, LYFI…GIVV, FIMS…VSIP, and MFIT…GITI. The interval 637–667 is disordered; the sequence is TEQLPSETPFHSGRRQSTGDLNATRRADFNV. Thr644 bears the Phosphothreonine mark.

It belongs to the monovalent cation:proton antiporter 1 (CPA1) transporter (TC 2.A.36) family. Post-translationally, phosphorylated. As to expression, in early stage larva, expressed in the twin excretory cell processes. At later larval stages, expression is more restricted, resulting in a 'beads on a chain' appearance.

It localises to the cell membrane. Its function is as follows. Serves some physiological function other than regulation of cellular pH. This chain is Probable Na(+)/H(+) antiporter nhx-9 (nhx-9), found in Caenorhabditis elegans.